The following is a 469-amino-acid chain: MFDDIPVSVGPMNEGERVRGPDMYVELAGPKSYGFELVKVVNKAEDKVEIIGKDIDEMEEGSRNPFAIIVEVSGSNLEEDLEGVLERRIHEFLNYIEGVMHLNQRDQVWIRINKDSFNKGLRLKHIGKVVQRLFKAEFPFIEKCDVTIITDPEKVKEELEKAREIYNKRDEKTKALHEEDVDVFYGCVMCQSFAPTHVCVITPDRPALCGGINYLDARAAAKIDPNGPIFEIPKGECLDEKLGIYSGVNEVVRERSQGTVEEVTLHSALEKPCTSCGCFEAIVFYIPEVDGFGIAHRGYKGETPMGIPFSTLAGQCSGGKQVPGFVGISISYMKSPKFLQGDGGWERVVWLPKELKERVKDAIPEELYDKIATEEDVKTTDELIKFLKEKGHPCAERIGAEVEEEAIEEEEVEEEMEEVEGIEVPTMTLPGTFAGLPPGIKIVLYNAVIKAEKIIITKEEPEKKKKKKK.

Positions 187, 190, 276, and 278 each coordinate [Ni-Fe-S] cluster.

This sequence belongs to the CdhC family. As to quaternary structure, monomer. The ACDS complex is made up of alpha, epsilon, beta, gamma and delta chains with a probable stoichiometry of (alpha(2)epsilon(2))(4)-beta(8)-(gamma(1)delta(1))(8) (Potential). [Ni-Fe-S] cluster is required as a cofactor.

It carries out the reaction Co(I)-[corrinoid Fe-S protein] + acetyl-CoA + H(+) = methyl-Co(III)-[corrinoid Fe-S protein] + CO + CoA. Part of a complex that catalyzes the reversible cleavage of acetyl-CoA, allowing autotrophic growth from CO(2). The alpha-epsilon complex generates CO from CO(2), while the beta subunit (this protein) combines the CO with CoA and a methyl group to form acetyl-CoA. The methyl group, which is incorporated into acetyl-CoA, is transferred to the beta subunit by a corrinoid iron-sulfur protein (the gamma-delta complex). This Methanocaldococcus jannaschii (strain ATCC 43067 / DSM 2661 / JAL-1 / JCM 10045 / NBRC 100440) (Methanococcus jannaschii) protein is Acetyl-CoA decarbonylase/synthase complex subunit beta 2 (cdhC2).